The following is a 151-amino-acid chain: MSSARNYRYIVRIAGTDIDGSLKTVYGLAEIKGVGVNLAYGICRRLGIDPEMRIGYLTDEEIKRIEDLLSNPSAYDIPSWMLNRRKDYVTGKDMHLIGAELIFYVKQDIEREKKIKSWRGIRHALGLKVRGQRTRTTGRLGLTVGVRKKRR.

This sequence belongs to the universal ribosomal protein uS13 family. In terms of assembly, part of the 30S ribosomal subunit. Forms a loose heterodimer with protein S19. Forms two bridges to the 50S subunit in the 70S ribosome.

In terms of biological role, located at the top of the head of the 30S subunit, it contacts several helices of the 16S rRNA. In the 70S ribosome it contacts the 23S rRNA (bridge B1a) and protein L5 of the 50S subunit (bridge B1b), connecting the 2 subunits; these bridges are implicated in subunit movement. The sequence is that of Small ribosomal subunit protein uS13 from Staphylothermus marinus (strain ATCC 43588 / DSM 3639 / JCM 9404 / F1).